The primary structure comprises 449 residues: MLSSQTSSIFTVSRLNQTVRLLLEQEMGQVWISGEISNFTQPASGHWYFTLKDDTAQVRCAMFRNSNRRVTFRPQHGQQVLVRANITLYEPRGDYQIIAESMQPAGEGLLQQKYEQLKAKLQAEGLFDQQHKQPLPSPAHCVGVITSKTGAALHDILHVLKRRDPSLPVIIYPTAVQGDDAPGQIVRAIELANARGECDVLIIGRGGGSLEDLWSFNDERVARAIFANRIPVVSAVGHETDVTIADFVADLRAPTPSAAAEIVSRNQQELLRQIQSAQQRLGMAMDYYLANRSRRFTQIFHRLQQQHPQLRLARQQTALERLRQRMGFALEARIKQATQRQQRVSQRLSQQNPQPRIHRAQSRIQQLEYRLTENIRSRLSEQRERFGNAVTHLEAVSPLATLARGYTVSTTTNGKVLKKIKQVKAGDIMTTRLEDGWLESEVKSVTPGT.

The protein belongs to the XseA family. As to quaternary structure, heterooligomer composed of large and small subunits.

It localises to the cytoplasm. The enzyme catalyses Exonucleolytic cleavage in either 5'- to 3'- or 3'- to 5'-direction to yield nucleoside 5'-phosphates.. Bidirectionally degrades single-stranded DNA into large acid-insoluble oligonucleotides, which are then degraded further into small acid-soluble oligonucleotides. This chain is Exodeoxyribonuclease 7 large subunit, found in Salmonella paratyphi B (strain ATCC BAA-1250 / SPB7).